The following is a 237-amino-acid chain: B3 domain-containing protein Os03g0184500 (237 aa).

The TF-B3 DNA-binding region spans 137–228 (FVKPMLHSHV…TFKVHIIRAT (92 aa)).

The protein localises to the nucleus. This Oryza sativa subsp. japonica (Rice) protein is B3 domain-containing protein Os03g0184500.